The primary structure comprises 458 residues: Opine oxidase subunit A (458 aa).

This sequence to T-protein and to dimethylglycine dehydrogenase. Heterodimer of a subunit A and a subunit B.

The protein operates within opine metabolism; octopine degradation. Oxidative cleavage of octopine into L-arginine and pyruvate. This Rhizobium meliloti (strain 1021) (Ensifer meliloti) protein is Opine oxidase subunit A (ooxA).